A 219-amino-acid chain; its full sequence is 2-hydroxy-3-keto-5-methylthiopentenyl-1-phosphate phosphatase (219 aa).

This sequence belongs to the HAD-like hydrolase superfamily. MtnX family.

It carries out the reaction 2-hydroxy-5-methylsulfanyl-3-oxopent-1-enyl phosphate + H2O = 1,2-dihydroxy-5-(methylsulfanyl)pent-1-en-3-one + phosphate. The protein operates within amino-acid biosynthesis; L-methionine biosynthesis via salvage pathway; L-methionine from S-methyl-5-thio-alpha-D-ribose 1-phosphate: step 4/6. In terms of biological role, dephosphorylates 2-hydroxy-3-keto-5-methylthiopentenyl-1-phosphate (HK-MTPenyl-1-P) yielding 1,2-dihydroxy-3-keto-5-methylthiopentene (DHK-MTPene). The sequence is that of 2-hydroxy-3-keto-5-methylthiopentenyl-1-phosphate phosphatase from Bacillus cereus (strain G9842).